Reading from the N-terminus, the 571-residue chain is Glutamate--tRNA ligase (571 aa).

A 'HIGH' region motif is present at residues 38-48 (PSPTGFMHIGG). The 'KMSKS' region signature appears at 316–320 (KLSKR). Position 319 (Lys319) interacts with ATP.

It belongs to the class-I aminoacyl-tRNA synthetase family. Glutamate--tRNA ligase type 1 subfamily. In terms of assembly, monomer.

The protein localises to the cytoplasm. The enzyme catalyses tRNA(Glu) + L-glutamate + ATP = L-glutamyl-tRNA(Glu) + AMP + diphosphate. Catalyzes the attachment of glutamate to tRNA(Glu) in a two-step reaction: glutamate is first activated by ATP to form Glu-AMP and then transferred to the acceptor end of tRNA(Glu). In Sorangium cellulosum (strain So ce56) (Polyangium cellulosum (strain So ce56)), this protein is Glutamate--tRNA ligase.